Here is a 379-residue protein sequence, read N- to C-terminus: UDP-4-amino-4-deoxy-L-arabinose--oxoglutarate aminotransferase (379 aa).

Lys182 bears the N6-(pyridoxal phosphate)lysine mark.

This sequence belongs to the DegT/DnrJ/EryC1 family. ArnB subfamily. As to quaternary structure, homodimer. Pyridoxal 5'-phosphate is required as a cofactor.

The enzyme catalyses UDP-4-amino-4-deoxy-beta-L-arabinose + 2-oxoglutarate = UDP-beta-L-threo-pentopyranos-4-ulose + L-glutamate. The protein operates within nucleotide-sugar biosynthesis; UDP-4-deoxy-4-formamido-beta-L-arabinose biosynthesis; UDP-4-deoxy-4-formamido-beta-L-arabinose from UDP-alpha-D-glucuronate: step 2/3. It functions in the pathway bacterial outer membrane biogenesis; lipopolysaccharide biosynthesis. Functionally, catalyzes the conversion of UDP-4-keto-arabinose (UDP-Ara4O) to UDP-4-amino-4-deoxy-L-arabinose (UDP-L-Ara4N). The modified arabinose is attached to lipid A and is required for resistance to polymyxin and cationic antimicrobial peptides. The chain is UDP-4-amino-4-deoxy-L-arabinose--oxoglutarate aminotransferase from Escherichia coli O157:H7.